The following is a 356-amino-acid chain: Nicotinate-nucleotide--dimethylbenzimidazole phosphoribosyltransferase (356 aa).

Glutamate 317 functions as the Proton acceptor in the catalytic mechanism.

This sequence belongs to the CobT family. Homodimer.

It carries out the reaction 5,6-dimethylbenzimidazole + nicotinate beta-D-ribonucleotide = alpha-ribazole 5'-phosphate + nicotinate + H(+). It participates in nucleoside biosynthesis; alpha-ribazole biosynthesis; alpha-ribazole from 5,6-dimethylbenzimidazole: step 1/2. In terms of biological role, catalyzes the synthesis of alpha-ribazole-5'-phosphate from nicotinate mononucleotide (NAMN) and 5,6-dimethylbenzimidazole (DMB). The chain is Nicotinate-nucleotide--dimethylbenzimidazole phosphoribosyltransferase from Salmonella agona (strain SL483).